Reading from the N-terminus, the 271-residue chain is Energy-coupling factor transporter ATP-binding protein EcfA (271 aa).

One can recognise an ABC transporter domain in the interval 2–231; the sequence is ISIQNLTFYY…PLFLQQYKLT (230 aa). ATP is bound at residue 34 to 41; sequence GHNGSGKS.

It belongs to the ABC transporter superfamily. Energy-coupling factor EcfA family. Forms a stable energy-coupling factor (ECF) transporter complex composed of 2 membrane-embedded substrate-binding proteins (S component), 2 ATP-binding proteins (A component) and 2 transmembrane proteins (T component).

Its subcellular location is the cell membrane. In terms of biological role, ATP-binding (A) component of a common energy-coupling factor (ECF) ABC-transporter complex. Unlike classic ABC transporters this ECF transporter provides the energy necessary to transport a number of different substrates. This Aster yellows witches'-broom phytoplasma (strain AYWB) protein is Energy-coupling factor transporter ATP-binding protein EcfA.